The chain runs to 361 residues: Mitogen-activated protein kinase 14A (361 aa).

In terms of domain architecture, Protein kinase spans 25–309 (YQNLSPVGSG…AAEALAHPYF (285 aa)). ATP contacts are provided by residues 31 to 39 (VGSGAYGTV) and lysine 54. The active-site Proton acceptor is the aspartate 151. Threonine 181 carries the phosphothreonine; by MAP2K6 modification. Residues 181-183 (TGY) carry the TXY motif. Tyrosine 183 is modified (phosphotyrosine; by MAP2K6).

It belongs to the protein kinase superfamily. CMGC Ser/Thr protein kinase family. MAP kinase subfamily. Mg(2+) serves as cofactor. In terms of processing, dually phosphorylated on Thr-181 and Tyr-183, which activates the enzyme. As to expression, exclusively expressed in the ovary.

The protein localises to the cytoplasm. It localises to the nucleus. It catalyses the reaction L-seryl-[protein] + ATP = O-phospho-L-seryl-[protein] + ADP + H(+). The enzyme catalyses L-threonyl-[protein] + ATP = O-phospho-L-threonyl-[protein] + ADP + H(+). With respect to regulation, activated by threonine and tyrosine phosphorylation by the dual specificity kinase, MKK6. Functionally, serine/threonine kinase which acts as an essential component of the MAP kinase signal transduction pathway. Mapk14a is one of the four p38 MAPKs which play an important role in the cascades of cellular responses evoked by extracellular stimuli such as pro-inflammatory cytokines or physical stress leading to direct activation of transcription factors. Accordingly, p38 MAPKs phosphorylate a broad range of proteins and it has been estimated that they may have approximately 200 to 300 substrates each. Some of the targets are downstream kinases which are activated through phosphorylation and further phosphorylate additional targets. This is Mitogen-activated protein kinase 14A (mapk14a) from Cyprinus carpio (Common carp).